Here is a 284-residue protein sequence, read N- to C-terminus: GPN-loop GTPase 3 (284 aa).

Glycine 13–threonine 18 lines the GTP pocket. The Gly-Pro-Asn (GPN)-loop; involved in dimer interface motif lies at glycine 72–asparagine 74. Residue threonine 174–aspartate 177 coordinates GTP. Residues lysine 261–glutamate 284 form a disordered region.

Belongs to the GPN-loop GTPase family. In terms of assembly, heterodimer with GPN1. Binds to RNA polymerase II (RNAPII). Interacts directly with subunits RPB4 and RPB7 and the CTD of RPB1.

Its function is as follows. Small GTPase required for proper localization of RNA polymerase II (RNAPII). May act at an RNAP assembly step prior to nuclear import. The protein is GPN-loop GTPase 3 of Bos taurus (Bovine).